The primary structure comprises 403 residues: S-adenosylmethionine synthase (403 aa).

His-17 serves as a coordination point for ATP. Asp-19 serves as a coordination point for Mg(2+). Glu-45 contacts K(+). L-methionine is bound by residues Glu-58 and Gln-104. Residues 104 to 114 (QSPDIAQGVDT) form a flexible loop region. ATP contacts are provided by residues 179–181 (DGK), 250–251 (KF), Asp-259, 265–266 (RK), Ala-282, and Lys-286. Position 259 (Asp-259) interacts with L-methionine. Lys-290 is an L-methionine binding site.

Belongs to the AdoMet synthase family. In terms of assembly, homotetramer; dimer of dimers. Mg(2+) serves as cofactor. K(+) is required as a cofactor.

Its subcellular location is the cytoplasm. The catalysed reaction is L-methionine + ATP + H2O = S-adenosyl-L-methionine + phosphate + diphosphate. It functions in the pathway amino-acid biosynthesis; S-adenosyl-L-methionine biosynthesis; S-adenosyl-L-methionine from L-methionine: step 1/1. Catalyzes the formation of S-adenosylmethionine (AdoMet) from methionine and ATP. The overall synthetic reaction is composed of two sequential steps, AdoMet formation and the subsequent tripolyphosphate hydrolysis which occurs prior to release of AdoMet from the enzyme. The polypeptide is S-adenosylmethionine synthase (Mycolicibacterium paratuberculosis (strain ATCC BAA-968 / K-10) (Mycobacterium paratuberculosis)).